We begin with the raw amino-acid sequence, 786 residues long: Rho GTPase-activating protein 10 (786 aa).

The 256-residue stretch at 7–262 folds into the BAR domain; the sequence is EFSDCYLDSP…IRQNPKDQKR (256 aa). Residues 265–372 form the PH domain; the sequence is QFTAEGYLYV…WLEALGGKEA (108 aa). In terms of domain architecture, Rho-GAP spans 389 to 574; it reads AQLDKMGFTI…ILIENHEKIF (186 aa). Disordered regions lie at residues 584 to 609 and 622 to 714; these read EPTC…RTKR and EGDS…PFPL. Residues 599–609 show a composition bias toward basic residues; that stretch reads QSKRQGQRTKR. A compositionally biased stretch (low complexity) spans 634–649; it reads PSSSQDSLSTPSPTTS. Polar residues predominate over residues 673–701; it reads TATTPSQTRPSMVQWLNMQSPTTPSSNPA. The span at 702-714 shows a compositional bias: pro residues; sequence GTPPSPRMSPFPL. An SH3 domain is found at 728 to 786; that stretch reads VINRKARAVYPCEAEHSSELSFEIGAIFEDVQTSREPGWLEGTLNGKRGLIPQNYVKLL.

Interacts with PKN3. Interacts with caspase-activated PAK2 proteolytic fragment PAK-2p34; the interaction does not affect ARHGAP10 GTPase activation activity towards RHOA and CDC42. Interacts via its SH3 domain with PTK2/FAK1. Interacts with PTK2B/PYK2; the interaction negatively regulates ARHGAP10 GTPase-activating activity. Interacts with MICAL1 and WDR44; complex formation might transit from GRAF2/ARHGAP10-MICAL1 to GRAF2/ARHGAP10-WDR44 complexes. In terms of processing, phosphorylated on tyrosine residues, probably involving PTK2B/PYK2. As to expression, high levels of expression in brain, testes, liver, heart and kidney.

The protein resides in the cytoplasm. It localises to the perinuclear region. The protein localises to the cell membrane. Its subcellular location is the endosome membrane. Functionally, GTPase-activating protein that catalyzes the conversion of active GTP-bound Rho GTPases to their inactive GDP-bound form, thus suppressing various Rho GTPase-mediated cellular processes. Also converts Cdc42 to an inactive GDP-bound state. Essential for PTKB2 regulation of cytoskeletal organization via Rho family GTPases. Inhibits PAK2 proteolytic fragment PAK-2p34 kinase activity and changes its localization from the nucleus to the perinuclear region. Stabilizes PAK-2p34 thereby increasing stimulation of cell death. Associates with MICAL1 on the endosomal membrane to promote Rab8-Rab10-dependent tubule extension. After dissociation with MICAL1, recruits WDR44 which connects the endoplasmic reticulum (ER) with the endosomal tubule, thereby participating in the export of a subset of neosynthesized proteins. The sequence is that of Rho GTPase-activating protein 10 (Arhgap10) from Mus musculus (Mouse).